Consider the following 275-residue polypeptide: Tumor necrosis factor receptor superfamily member 14 (275 aa).

Positions 1–38 (MEPLPGWGSAPWSQAPTDNTFRLVPCVFLLNLLQRISA) are cleaved as a signal peptide. TNFR-Cys repeat units follow at residues 41-75 (SCRQ…GTVC), 77-119 (PCPP…DTVC), and 120-162 (RCIP…DTVC). 8 cysteine pairs are disulfide-bonded: cysteine 42/cysteine 53, cysteine 54/cysteine 67, cysteine 57/cysteine 75, cysteine 78/cysteine 93, cysteine 96/cysteine 111, cysteine 99/cysteine 119, cysteine 121/cysteine 138, and cysteine 144/cysteine 162. Asparagine 184 and asparagine 197 each carry an N-linked (GlcNAc...) asparagine glycan. A helical membrane pass occupies residues 211–231 (VVSILLPLVIVGAGIAGFLIC).

The protein belongs to the tumor necrosis factor receptor superfamily. As to quaternary structure, interacts with TRAF2, TRAF3 and TRAF5. Interacts (via CRD1/TNFR-Cys 1) with CD160; this interaction is direct. Interacts (via CRD1/TNFR-Cys 1) with BTLA; this interaction is direct. Post-translationally, N-glycosylated. As to expression, expressed at mucosal sites including colon and pulmonary epithelial cells. Expressed in naive T cells.

It localises to the cell membrane. Its function is as follows. Receptor for four distinct ligands: The TNF superfamily members TNFSF14/LIGHT and homotrimeric LTA/lymphotoxin-alpha and the immunoglobulin superfamily members BTLA and CD160, altogether defining a complex stimulatory and inhibitory signaling network. Signals via the TRAF2-TRAF3 E3 ligase pathway to promote immune cell survival and differentiation. Participates in bidirectional cell-cell contact signaling between antigen presenting cells and lymphocytes. In response to ligation of TNFSF14/LIGHT, delivers costimulatory signals to T cells, promoting cell proliferation and effector functions. Interacts with CD160 on NK cells, enhancing IFNG production and anti-tumor immune response. In the context of bacterial infection, acts as a signaling receptor on epithelial cells for CD160 from intraepithelial lymphocytes, triggering the production of antimicrobial proteins and pro-inflammatory cytokines. Upon binding to CD160 on activated CD4+ T cells, down-regulates CD28 costimulatory signaling, restricting memory and alloantigen-specific immune response. May interact in cis (on the same cell) or in trans (on other cells) with BTLA. In cis interactions, appears to play an immune regulatory role inhibiting in trans interactions in naive T cells to maintain a resting state. In trans interactions, can predominate during adaptive immune response to provide survival signals to effector T cells. The protein is Tumor necrosis factor receptor superfamily member 14 of Mus musculus (Mouse).